The chain runs to 90 residues: Small ribosomal subunit protein uS15 (90 aa).

Belongs to the universal ribosomal protein uS15 family. In terms of assembly, part of the 30S ribosomal subunit. Forms a bridge to the 50S subunit in the 70S ribosome, contacting the 23S rRNA.

One of the primary rRNA binding proteins, it binds directly to 16S rRNA where it helps nucleate assembly of the platform of the 30S subunit by binding and bridging several RNA helices of the 16S rRNA. Functionally, forms an intersubunit bridge (bridge B4) with the 23S rRNA of the 50S subunit in the ribosome. This Helicobacter pylori (strain P12) protein is Small ribosomal subunit protein uS15.